The chain runs to 149 residues: Transcription antitermination protein NusB (149 aa).

The protein belongs to the NusB family.

Involved in transcription antitermination. Required for transcription of ribosomal RNA (rRNA) genes. Binds specifically to the boxA antiterminator sequence of the ribosomal RNA (rrn) operons. This is Transcription antitermination protein NusB from Hahella chejuensis (strain KCTC 2396).